We begin with the raw amino-acid sequence, 220 residues long: Chaperone protein TorD (220 aa).

This sequence belongs to the TorD/DmsD family. TorD subfamily.

Its subcellular location is the cytoplasm. Its function is as follows. Involved in the biogenesis of TorA. Acts on TorA before the insertion of the molybdenum cofactor and, as a result, probably favors a conformation of the apoenzyme that is competent for acquiring the cofactor. The chain is Chaperone protein TorD from Vibrio cholerae serotype O1 (strain M66-2).